Here is an 878-residue protein sequence, read N- to C-terminus: Vacuolar membrane protease (878 aa).

The Cytoplasmic segment spans residues 1 to 16 (MASLRLPRANPLAFTR). Residues 17-37 (WPVTVITAIVYLALLIPLLVV) traverse the membrane as a helical segment. Residues 38-390 (HHVVPSAPSS…STFVLFQLHT (353 aa)) lie on the Vacuolar side of the membrane. Asn-53 and Asn-119 each carry an N-linked (GlcNAc...) asparagine glycan. Positions 174 and 186 each coordinate Zn(2+). Residue Glu-220 is the Proton acceptor of the active site. Positions 221, 246, and 319 each coordinate Zn(2+). Residues 391 to 411 (LFALLVTLLIVGPLTLLFTSI) form a helical membrane-spanning segment. Residues 412–442 (ALTKADKMYLFRSSAKSEDRLDVVPLQGLRG) are Cytoplasmic-facing. Residues 443-463 (FFRFPFLFGIPTVVTVGLAYL) form a helical membrane-spanning segment. The Vacuolar segment spans residues 464-473 (VTKVNPYIIH). A helical transmembrane segment spans residues 474 to 494 (SSAYAVWSMMVAAWVFLAWFV). At 495–508 (SRVADFARPSAFHR) the chain is on the cytoplasmic side. A helical membrane pass occupies residues 509–529 (IYTLTWMYVLSWVSAVIATVY). At 530–533 (ANQR) the chain is on the vacuolar side. A helical membrane pass occupies residues 534–554 (GLAGGYFIFFFHAGIFLATWI). At 555 to 659 (SYLELFALPS…ALPKWTWGLQ (105 aa)) the chain is on the cytoplasmic side. Residues 577–590 (GRASGHGSRRGTTS) show a composition bias toward low complexity. Positions 577–611 (GRASGHGSRRGTTSGEDDGEEAEEEPTESTSLLGS) are disordered. Over residues 591–603 (GEDDGEEAEEEPT) the composition is skewed to acidic residues. Residues 660–680 (LLLTAPITLIMVGPLALLTIS) form a helical membrane-spanning segment. Residues 681–693 (AISQTGQDGGHPL) are Vacuolar-facing. Residues 694–714 (FAYVAIAIFTTIMLTPLLPFI) form a helical membrane-spanning segment. Residues 715 to 721 (HRYTYHV) lie on the Cytoplasmic side of the membrane. The chain crosses the membrane as a helical span at residues 722–742 (PLFLLAVFLGTLIYNLVAFPF). Residues 743–878 (SDSNRLKLYY…RRAFEIGNDD (136 aa)) are Vacuolar-facing.

The protein belongs to the peptidase M28 family. Zn(2+) serves as cofactor.

It is found in the vacuole membrane. Functionally, may be involved in vacuolar sorting and osmoregulation. This Aspergillus flavus (strain ATCC 200026 / FGSC A1120 / IAM 13836 / NRRL 3357 / JCM 12722 / SRRC 167) protein is Vacuolar membrane protease.